A 105-amino-acid polypeptide reads, in one-letter code: UPF0235 protein A1C_06510 (105 aa).

The protein belongs to the UPF0235 family.

The sequence is that of UPF0235 protein A1C_06510 from Rickettsia akari (strain Hartford).